The primary structure comprises 282 residues: Undecaprenyl-diphosphatase (282 aa).

8 helical membrane passes run V7–I29, F45–W65, G89–K109, L115–I135, L153–L173, F196–L216, T229–M249, and W258–I278.

Belongs to the UppP family.

The protein localises to the cell inner membrane. The catalysed reaction is di-trans,octa-cis-undecaprenyl diphosphate + H2O = di-trans,octa-cis-undecaprenyl phosphate + phosphate + H(+). Catalyzes the dephosphorylation of undecaprenyl diphosphate (UPP). Confers resistance to bacitracin. The polypeptide is Undecaprenyl-diphosphatase (Acidiphilium cryptum (strain JF-5)).